The following is a 376-amino-acid chain: Protein-glutamate methylesterase/protein-glutamine glutaminase (376 aa).

One can recognise a Response regulatory domain in the interval 4-121; it reads KVLVVDDSSF…ARNRDEAVSL (118 aa). Asp-55 carries the 4-aspartylphosphate modification. The tract at residues 142–161 is disordered; sequence SSQSTSTVESRTATTRTATS. Over residues 145–161 the composition is skewed to low complexity; sequence STSTVESRTATTRTATS. One can recognise a CheB-type methylesterase domain in the interval 183 to 376; sequence TGKKYQLTAI…ERMLVEVGLK (194 aa). Active-site residues include Ser-195, His-222, and Asp-318.

Belongs to the CheB family. In terms of processing, phosphorylated by CheA. Phosphorylation of the N-terminal regulatory domain activates the methylesterase activity.

It is found in the cytoplasm. The enzyme catalyses [protein]-L-glutamate 5-O-methyl ester + H2O = L-glutamyl-[protein] + methanol + H(+). It carries out the reaction L-glutaminyl-[protein] + H2O = L-glutamyl-[protein] + NH4(+). Its function is as follows. Involved in chemotaxis. Part of a chemotaxis signal transduction system that modulates chemotaxis in response to various stimuli. Catalyzes the demethylation of specific methylglutamate residues introduced into the chemoreceptors (methyl-accepting chemotaxis proteins or MCP) by CheR. Also mediates the irreversible deamidation of specific glutamine residues to glutamic acid. The polypeptide is Protein-glutamate methylesterase/protein-glutamine glutaminase (Aliivibrio fischeri (strain ATCC 700601 / ES114) (Vibrio fischeri)).